The sequence spans 399 residues: Elongation factor Tu (399 aa).

The tr-type G domain maps to lysine 10 to valine 209. Residues glycine 19–threonine 26 are G1. Glycine 19–threonine 26 contributes to the GTP binding site. Threonine 26 provides a ligand contact to Mg(2+). Residues glycine 62–asparagine 66 form a G2 region. The G3 stretch occupies residues aspartate 83–glycine 86. GTP contacts are provided by residues aspartate 83–histidine 87 and asparagine 138–aspartate 141. Residues asparagine 138–aspartate 141 are G4. The tract at residues serine 175–tyrosine 177 is G5.

Belongs to the TRAFAC class translation factor GTPase superfamily. Classic translation factor GTPase family. EF-Tu/EF-1A subfamily. In terms of assembly, monomer.

It localises to the cytoplasm. It catalyses the reaction GTP + H2O = GDP + phosphate + H(+). Functionally, GTP hydrolase that promotes the GTP-dependent binding of aminoacyl-tRNA to the A-site of ribosomes during protein biosynthesis. In Bifidobacterium longum subsp. infantis (strain ATCC 15697 / DSM 20088 / JCM 1222 / NCTC 11817 / S12), this protein is Elongation factor Tu.